The primary structure comprises 610 residues: UvrABC system protein C (610 aa).

The GIY-YIG domain maps to Ser16–Val94. The 36-residue stretch at Asp204–Val239 folds into the UVR domain.

It belongs to the UvrC family. As to quaternary structure, interacts with UvrB in an incision complex.

The protein resides in the cytoplasm. In terms of biological role, the UvrABC repair system catalyzes the recognition and processing of DNA lesions. UvrC both incises the 5' and 3' sides of the lesion. The N-terminal half is responsible for the 3' incision and the C-terminal half is responsible for the 5' incision. This Escherichia coli (strain SMS-3-5 / SECEC) protein is UvrABC system protein C.